A 431-amino-acid polypeptide reads, in one-letter code: Adenylosuccinate synthetase (431 aa).

GTP-binding positions include 12-18 (GDEGKGK) and 40-42 (GHT). D13 serves as the catalytic Proton acceptor. 2 residues coordinate Mg(2+): D13 and G40. Residues 13–16 (DEGK), 38–41 (NAGH), T128, R142, Q223, T238, and R301 contribute to the IMP site. The Proton donor role is filled by H41. Residue 297 to 303 (TVTGRPR) coordinates substrate. GTP is bound by residues R303, 329–331 (SID), and 411–413 (SVG).

It belongs to the adenylosuccinate synthetase family. In terms of assembly, homodimer. The cofactor is Mg(2+).

The protein localises to the cytoplasm. It carries out the reaction IMP + L-aspartate + GTP = N(6)-(1,2-dicarboxyethyl)-AMP + GDP + phosphate + 2 H(+). It participates in purine metabolism; AMP biosynthesis via de novo pathway; AMP from IMP: step 1/2. Its function is as follows. Plays an important role in the de novo pathway of purine nucleotide biosynthesis. Catalyzes the first committed step in the biosynthesis of AMP from IMP. The chain is Adenylosuccinate synthetase from Lacticaseibacillus paracasei (strain ATCC 334 / BCRC 17002 / CCUG 31169 / CIP 107868 / KCTC 3260 / NRRL B-441) (Lactobacillus paracasei).